The following is a 288-amino-acid chain: UDP-3-O-acyl-N-acetylglucosamine deacetylase (288 aa).

H79, H236, and D240 together coordinate Zn(2+). H263 acts as the Proton donor in catalysis.

It belongs to the LpxC family. Zn(2+) serves as cofactor.

The enzyme catalyses a UDP-3-O-[(3R)-3-hydroxyacyl]-N-acetyl-alpha-D-glucosamine + H2O = a UDP-3-O-[(3R)-3-hydroxyacyl]-alpha-D-glucosamine + acetate. The protein operates within glycolipid biosynthesis; lipid IV(A) biosynthesis; lipid IV(A) from (3R)-3-hydroxytetradecanoyl-[acyl-carrier-protein] and UDP-N-acetyl-alpha-D-glucosamine: step 2/6. Functionally, catalyzes the hydrolysis of UDP-3-O-myristoyl-N-acetylglucosamine to form UDP-3-O-myristoylglucosamine and acetate, the committed step in lipid A biosynthesis. The chain is UDP-3-O-acyl-N-acetylglucosamine deacetylase from Rickettsia bellii (strain OSU 85-389).